A 211-amino-acid polypeptide reads, in one-letter code: Probable septum site-determining protein MinC (211 aa).

It belongs to the MinC family. As to quaternary structure, interacts with MinD and FtsZ.

In terms of biological role, cell division inhibitor that blocks the formation of polar Z ring septums. Rapidly oscillates between the poles of the cell to destabilize FtsZ filaments that have formed before they mature into polar Z rings. Prevents FtsZ polymerization. The protein is Probable septum site-determining protein MinC of Clostridium perfringens (strain 13 / Type A).